We begin with the raw amino-acid sequence, 2422 residues long: Non-reducing polyketide synthase trt4 (2422 aa).

Positions 14–196 (VLFGPKCPKT…HHSDHTSVVQ (183 aa)) are N-terminal acylcarrier protein transacylase domain (SAT). The interval 289–314 (VEPPDSHHNTNTTQDSDVTTNASPLT) is disordered. The span at 297-312 (NTNTTQDSDVTTNASP) shows a compositional bias: polar residues. A Ketosynthase family 3 (KS3) domain is found at 329 to 745 (TVPIAVTGMA…GSNAAIVLQE (417 aa)). Active-site for beta-ketoacyl synthase activity residues include C494, H629, and H668. The interval 856-1121 (LCFGGQTGNT…CPIDLSGPQA (266 aa)) is malonyl-CoA:ACP transacylase (MAT) domain. S904 acts as the For acyl/malonyl transferase activity in catalysis. The tract at residues 1190-1316 (PSLVKLLNND…GKISISSEAN (127 aa)) is N-terminal hotdog fold. In terms of domain architecture, PKS/mFAS DH spans 1190–1495 (PSLVKLLNND…FTCVSIQSLK (306 aa)). The interval 1191 to 1494 (SLVKLLNNDG…TFTCVSIQSL (304 aa)) is product template (PT) domain. Residue H1221 is the Proton acceptor; for dehydratase activity of the active site. Residues 1345–1495 (SSGLKRSTVY…FTCVSIQSLK (151 aa)) are C-terminal hotdog fold. The active-site Proton donor; for dehydratase activity is the D1402. Residues 1535 to 1612 (SRSEDGLRVV…GLVQRIFPGG (78 aa)) form the Carrier domain. An O-(pantetheine 4'-phosphoryl)serine modification is found at S1572. Residues 1615–1636 (AHVETHSQPPDKIGITTGDRMP) are disordered. The interval 1774-2007 (QHASEHKLLH…GFNWVDWTDN (234 aa)) is methyltransferase (CMeT) domain. The segment at 2036-2383 (NAVAEETLVY…LAPHIPTDEY (348 aa)) is thioesterase (TE) domain. Catalysis depends on for thioesterase activity residues S2159, D2320, and H2352.

It carries out the reaction 3 malonyl-CoA + acetyl-CoA + 2 S-adenosyl-L-methionine = 3,5-dimethylorsellinate + 2 S-adenosyl-L-homocysteine + 3 CO2 + 4 CoA. The protein operates within secondary metabolite biosynthesis; terpenoid biosynthesis. Functionally, non-reducing polyketide synthase; part of the gene cluster that mediates the biosynthesis of terretonin, a fungal meroterpenoid that acts as a mycotoxin. The first step of the pathway is the synthesis of 3,5-dimethylorsellinic acid (DMOA) by the polyketide synthase trt4. DMOA is then prenylated into farnesyl-DMOA by the polyprenyl transferase trt2. Methylation by the methyltransferase trt5 then leads to farnesyl-DMOA methyl ester which is further subject to epoxidation by the FAD-dependent monooxygenase trt8 to yield epoxyfarnesyl-DMOA methyl ester. Cyclization of epoxyfarnesyl-DMOA methyl ester by the terpene cyclase trt1 leads to a tetracycle intermediate which is in turn converted to preterretonin. Dehydrogenase trt9 comes next to transform preterretonin to preterrenoid. The FAD-dependent monooxygenase trt3 is then required for the C-hydroxylation at C16 of preterrenoid to yield terrenoid. The cytochrome P450 trt6 catalyzes three successive oxidations to transform terrenoid into an unstable intermediate, which then undergoes the D-ring expansion and unusual rearrangement of the methoxy group to afford the core skeleton of terretonin. Trt14 catalyzes the D-ring expansion of terretonin involving intramolecular methoxy rearrangement as well as the hydrolysis of the expanded D-ring and the methyl ester moiety. Finally, the nonheme iron-dependent dioxygenase trt7 accomplishes the last two oxidation reactions steps to complete the biosynthesis of terretonin. Terretonin C is produced via spontaneous decarboxylation of the terretonin precursor. Another shunt product of the terretonin biosynthesis is dihydrofarnesyl-DMOA, derived from epoxyfarnesyl-DMOA through hydrolysis of the epoxide. In Aspergillus terreus (strain NIH 2624 / FGSC A1156), this protein is Non-reducing polyketide synthase trt4.